The following is a 55-amino-acid chain: DNA-binding protein (55 aa).

Residues 1–55 (MVYRRRRRSSTGTTYGSTRRRRSSGYRRRPGRPRTYRRSRSRSSTGRRSYRTRYY) form a disordered region. A run of 2 repeats spans residues 5–10 (RRRRSS) and 19–24 (RRRRSS). The interval 5–24 (RRRRSSTGTTYGSTRRRRSS) is 2 X 6 AA repeats of R-R-R-R-S-S. A compositionally biased stretch (basic residues) spans 18–41 (TRRRRSSGYRRRPGRPRTYRRSRS).

Interacts with protein AC132. Phosphorylated.

The protein resides in the virion. The protein localises to the host cytoplasm. Plays a role in viral DNA packaging and nucleocapsid assembly. Promotes viral gene transcription during the late stage of infection while it is non-essential for the basal level of viral gene transcription. The protein is DNA-binding protein (P6.9) of Lepidoptera (butterflies and moths).